The primary structure comprises 508 residues: 2,3-bisphosphoglycerate-independent phosphoglycerate mutase (508 aa).

Asp-9 and Ser-59 together coordinate Mn(2+). Ser-59 serves as the catalytic Phosphoserine intermediate. Residues His-120, 149–150, Arg-181, Arg-187, 254–257, and Lys-331 contribute to the substrate site; these read RD and RADR. Asp-398, His-402, Asp-439, His-440, and His-456 together coordinate Mn(2+).

Belongs to the BPG-independent phosphoglycerate mutase family. Mn(2+) is required as a cofactor.

The enzyme catalyses (2R)-2-phosphoglycerate = (2R)-3-phosphoglycerate. It participates in carbohydrate degradation; glycolysis; pyruvate from D-glyceraldehyde 3-phosphate: step 3/5. Its function is as follows. Catalyzes the interconversion of 2-phosphoglycerate and 3-phosphoglycerate. The protein is 2,3-bisphosphoglycerate-independent phosphoglycerate mutase of Halobacterium salinarum (strain ATCC 700922 / JCM 11081 / NRC-1) (Halobacterium halobium).